Consider the following 457-residue polypeptide: Siroheme synthase (457 aa).

Positions 1–204 (MDHLPIFCQL…NDQKAITETT (204 aa)) are precorrin-2 dehydrogenase /sirohydrochlorin ferrochelatase. NAD(+) contacts are provided by residues 22-23 (DV) and 43-44 (LA). A Phosphoserine modification is found at Ser128. A uroporphyrinogen-III C-methyltransferase region spans residues 216–457 (GEVVLVGAGP…RDKLNWFSNH (242 aa)). Position 225 (Pro225) interacts with S-adenosyl-L-methionine. The Proton acceptor role is filled by Asp248. Residue Lys270 is the Proton donor of the active site. Residues 301–303 (GGD), Ile306, 331–332 (TA), Met382, and Gly411 contribute to the S-adenosyl-L-methionine site.

In the N-terminal section; belongs to the precorrin-2 dehydrogenase / sirohydrochlorin ferrochelatase family. It in the C-terminal section; belongs to the precorrin methyltransferase family.

The enzyme catalyses uroporphyrinogen III + 2 S-adenosyl-L-methionine = precorrin-2 + 2 S-adenosyl-L-homocysteine + H(+). It catalyses the reaction precorrin-2 + NAD(+) = sirohydrochlorin + NADH + 2 H(+). The catalysed reaction is siroheme + 2 H(+) = sirohydrochlorin + Fe(2+). It participates in cofactor biosynthesis; adenosylcobalamin biosynthesis; precorrin-2 from uroporphyrinogen III: step 1/1. Its pathway is cofactor biosynthesis; adenosylcobalamin biosynthesis; sirohydrochlorin from precorrin-2: step 1/1. It functions in the pathway porphyrin-containing compound metabolism; siroheme biosynthesis; precorrin-2 from uroporphyrinogen III: step 1/1. The protein operates within porphyrin-containing compound metabolism; siroheme biosynthesis; siroheme from sirohydrochlorin: step 1/1. It participates in porphyrin-containing compound metabolism; siroheme biosynthesis; sirohydrochlorin from precorrin-2: step 1/1. Its function is as follows. Multifunctional enzyme that catalyzes the SAM-dependent methylations of uroporphyrinogen III at position C-2 and C-7 to form precorrin-2 via precorrin-1. Then it catalyzes the NAD-dependent ring dehydrogenation of precorrin-2 to yield sirohydrochlorin. Finally, it catalyzes the ferrochelation of sirohydrochlorin to yield siroheme. This Escherichia coli O45:K1 (strain S88 / ExPEC) protein is Siroheme synthase.